Here is a 246-residue protein sequence, read N- to C-terminus: Bis(5'-nucleosyl)-tetraphosphatase PrpE [asymmetrical] (246 aa).

Belongs to the PrpE family. The cofactor is Ni(2+).

The catalysed reaction is P(1),P(4)-bis(5'-guanosyl) tetraphosphate + H2O = GMP + GTP + 2 H(+). Functionally, asymmetrically hydrolyzes Ap4p to yield AMP and ATP. In Bacillus cereus (strain Q1), this protein is Bis(5'-nucleosyl)-tetraphosphatase PrpE [asymmetrical].